The sequence spans 282 residues: Major surface antigen 4 (282 aa).

Positions 1 to 29 (MNYRELFTGGLSAATVCACSLLVSGAVVA) are cleaved as a signal peptide.

The protein belongs to the surface antigen msp4 family.

The polypeptide is Major surface antigen 4 (msp4) (Anaplasma marginale).